Here is a 457-residue protein sequence, read N- to C-terminus: BAG family molecular chaperone regulator 4 (457 aa).

The interval Met1–Asn101 is disordered. Phosphoserine is present on Ser7. The segment covering Gly8–Tyr20 has biased composition (low complexity). The segment covering Val30–Pro47 has biased composition (pro residues). 3 positions are modified to omega-N-methylarginine: Arg40, Arg53, and Arg108. Disordered stretches follow at residues Tyr113–Tyr136, Ser166–Asp333, and Leu347–Pro377. Polar residues predominate over residues Ser166 to Pro182. An Omega-N-methylarginine modification is found at Arg185. Composition is skewed to low complexity over residues Ser274 to Pro284 and Gln294 to Ser308. Polar residues-rich tracts occupy residues Gln320–Asp333 and Leu347–Leu365. The BAG domain occupies Ser379–Gly456.

As to quaternary structure, binds to the ATPase domain of HSP/HSC70 chaperones. Binds to the death domain of TNFRSF1A in the absence of TNF and thereby prevents binding of adapter molecules such as TRADD or TRAF2. Binds to the death domain of TNFRSF12. Interacts with PRKN. Ubiquitous.

It localises to the cytoplasm. Inhibits the chaperone activity of HSP70/HSC70 by promoting substrate release. Prevents constitutive TNFRSF1A signaling. Negative regulator of PRKN translocation to damaged mitochondria. The sequence is that of BAG family molecular chaperone regulator 4 (BAG4) from Homo sapiens (Human).